Consider the following 155-residue polypeptide: Cytochrome P450 (155 aa).

Residue Cys99 coordinates heme.

It belongs to the cytochrome P450 family. Heme is required as a cofactor.

This chain is Cytochrome P450, found in Helianthus annuus (Common sunflower).